Here is a 525-residue protein sequence, read N- to C-terminus: Anti-silencing protein 2 (525 aa).

The interval 467-525 (LPRVPTDSPQLPSKDKSQETAKKDDRPKLVANEPVTLDTSTPPVAQSLADSKHCSGLHK) is disordered. Residues 479-494 (SKDKSQETAKKDDRPK) show a composition bias toward basic and acidic residues.

In terms of biological role, derepression of silent mating type loci when overexpressed. In Saccharomyces cerevisiae (strain ATCC 204508 / S288c) (Baker's yeast), this protein is Anti-silencing protein 2 (ASF2).